Reading from the N-terminus, the 147-residue chain is 16 kDa phloem protein 2 (147 aa).

The 103-residue stretch at methionine 1–alanine 103 folds into the C2 domain. Residues aspartate 20, aspartate 26, aspartate 73, aspartate 75, and aspartate 81 each coordinate Ca(2+). The tract at residues glutamate 126–tyrosine 147 is disordered.

Ca(2+) serves as cofactor.

Functionally, binds to both sense and antisense RNA. Can also bind sheared DNA and dodecamer DNA with a low affinity. Interacts with mesophyll plasmodesmata to mediate its own cell-to-cell transport and potentiate RNA trafficking. May play a role in plant defense signaling. The chain is 16 kDa phloem protein 2 from Arabidopsis thaliana (Mouse-ear cress).